We begin with the raw amino-acid sequence, 150 residues long: Monothiol glutaredoxin-S13 (150 aa).

The interval 30 to 52 is disordered; the sequence is PSSSSSSLSWLTSGSPKPTSISN. Over residues 31–44 the composition is skewed to low complexity; the sequence is SSSSSSLSWLTSGS. Residues 53-149 enclose the Glutaredoxin domain; the sequence is KRSSNLVVME…PTLRQAGALW (97 aa). Residue C73 coordinates [2Fe-2S] cluster. The Responsive for interaction with TGA factors motif lies at 147–150; sequence ALWL.

It belongs to the glutaredoxin family. CC-type subfamily.

The protein resides in the cytoplasm. Its subcellular location is the nucleus. In terms of biological role, may only reduce GSH-thiol disulfides, but not protein disulfides. The sequence is that of Monothiol glutaredoxin-S13 (GRXS13) from Arabidopsis thaliana (Mouse-ear cress).